A 270-amino-acid chain; its full sequence is Surfeit locus protein 4 homolog (270 aa).

Transmembrane regions (helical) follow at residues 65 to 85 (FLAT…CGMV), 93 to 113 (IAVG…SILW), 115 to 135 (FQFL…LAEA), 178 to 198 (LSVW…LVVL), 206 to 226 (ALIL…WWTI), and 243 to 263 (TLSV…GVSM). A Di-lysine motif motif is present at residues 267–270 (KKKW).

This sequence belongs to the SURF4 family.

Its subcellular location is the endoplasmic reticulum membrane. Functionally, endoplasmic reticulum cargo receptor that mediates the export of lipoproteins by recruiting cargos into COPII vesicles to facilitate their secretion. This Drosophila melanogaster (Fruit fly) protein is Surfeit locus protein 4 homolog.